A 438-amino-acid chain; its full sequence is ATP-dependent RNA helicase RhlB (438 aa).

A Q motif motif is present at residues 9–37 (HKFADFGLQPQVIDGLEKKGFVYCTPIQA). In terms of domain architecture, Helicase ATP-binding spans 40-219 (LPVLLSGQDI…FEHMNNPEHV (180 aa)). Residue 53 to 60 (AQTGTGKT) participates in ATP binding. The short motif at 165 to 168 (DEAD) is the DEAD box element. Positions 245 to 390 (ALLQTLIEEE…TSDYDPSALL (146 aa)) constitute a Helicase C-terminal domain. A disordered region spans residues 394-438 (PAPLSLRSSPQQRRTNTAGSRNSNNGGNRKPQQRRPRAPRPKKEA). Residues 406-423 (RRTNTAGSRNSNNGGNRK) show a composition bias toward low complexity. Residues 424 to 438 (PQQRRPRAPRPKKEA) are compositionally biased toward basic residues.

Belongs to the DEAD box helicase family. RhlB subfamily. Component of the RNA degradosome, which is a multiprotein complex involved in RNA processing and mRNA degradation.

It localises to the cytoplasm. The enzyme catalyses ATP + H2O = ADP + phosphate + H(+). In terms of biological role, DEAD-box RNA helicase involved in RNA degradation. Has RNA-dependent ATPase activity and unwinds double-stranded RNA. The sequence is that of ATP-dependent RNA helicase RhlB from Vibrio cholerae serotype O1 (strain ATCC 39541 / Classical Ogawa 395 / O395).